Here is a 147-residue protein sequence, read N- to C-terminus: Hemoglobin subunit beta (147 aa).

The 145-residue stretch at 3 to 147 (EWTDSERAII…VVSALGREYH (145 aa)) folds into the Globin domain. The heme b site is built by histidine 64 and histidine 93.

It belongs to the globin family. Heterotetramer of two alpha chains and two beta chains. Red blood cells.

Functionally, involved in oxygen transport from gills to the various peripheral tissues. This is Hemoglobin subunit beta (hbb) from Gadus morhua (Atlantic cod).